Consider the following 429-residue polypeptide: Enolase (429 aa).

Gln-169 is a binding site for (2R)-2-phosphoglycerate. The Proton donor role is filled by Glu-211. Residues Asp-248, Glu-289, and Asp-316 each contribute to the Mg(2+) site. (2R)-2-phosphoglycerate is bound by residues Lys-341, Arg-370, Ser-371, and Lys-392. The active-site Proton acceptor is the Lys-341.

This sequence belongs to the enolase family. It depends on Mg(2+) as a cofactor.

It localises to the cytoplasm. The protein localises to the secreted. Its subcellular location is the cell surface. The enzyme catalyses (2R)-2-phosphoglycerate = phosphoenolpyruvate + H2O. The protein operates within carbohydrate degradation; glycolysis; pyruvate from D-glyceraldehyde 3-phosphate: step 4/5. Its function is as follows. Catalyzes the reversible conversion of 2-phosphoglycerate (2-PG) into phosphoenolpyruvate (PEP). It is essential for the degradation of carbohydrates via glycolysis. In Anaplasma phagocytophilum (strain HZ), this protein is Enolase.